The following is a 310-amino-acid chain: E3 ubiquitin-protein ligase AIP2 (310 aa).

The segment at 230-271 (CCICKENLVIGDKMQELPCKHTFHPPCLKPWLDEHNSCPICR) adopts an RING-type; atypical zinc-finger fold. The stretch at 276–306 (TDDQKYENWKEREKEAEEERKGAENAVRGGE) forms a coiled coil. A compositionally biased stretch (basic and acidic residues) spans 285–298 (KEREKEAEEERKGA). The segment at 285–310 (KEREKEAEEERKGAENAVRGGEYMYV) is disordered.

In terms of assembly, interacts with ABI3 (via C-terminus). Auto-ubiquitinated. As to expression, highly expressed in leaves and at lower levels in flowers and seeds.

Its subcellular location is the nucleus. The protein resides in the cytoplasm. It carries out the reaction S-ubiquitinyl-[E2 ubiquitin-conjugating enzyme]-L-cysteine + [acceptor protein]-L-lysine = [E2 ubiquitin-conjugating enzyme]-L-cysteine + N(6)-ubiquitinyl-[acceptor protein]-L-lysine.. It participates in protein modification; protein ubiquitination. E3 ubiquitin-protein ligase that acts as a negative regulator of abscisic acid (ABA) signaling. Mediates ubiquitination and subsequent proteasomal degradation of the transcription factor ABI3. The sequence is that of E3 ubiquitin-protein ligase AIP2 (AIP2) from Arabidopsis thaliana (Mouse-ear cress).